The following is a 494-amino-acid chain: Catalase A (494 aa).

Residues 1–23 (MTDRPTITTTAGAPVPDNQNSLT) are compositionally biased toward polar residues. Positions 1–25 (MTDRPTITTTAGAPVPDNQNSLTAG) are disordered. Catalysis depends on residues histidine 55 and asparagine 127. Tyrosine 337 contacts heme.

It belongs to the catalase family. Requires heme as cofactor.

The protein resides in the periplasm. It carries out the reaction 2 H2O2 = O2 + 2 H2O. In terms of biological role, decomposes hydrogen peroxide into water and oxygen; serves to protect cells from the toxic effects of hydrogen peroxide. The polypeptide is Catalase A (katA) (Rhizobium meliloti (strain 1021) (Ensifer meliloti)).